Here is a 263-residue protein sequence, read N- to C-terminus: Proenkephalin-A (263 aa).

The signal sequence occupies residues 1-24; sequence MARFLGLCTWLLALGPGLLATVRA. 3 disulfide bridges follow: Cys-26–Cys-48, Cys-30–Cys-52, and Cys-33–Cys-65. 2 propeptides span residues 192-203 and 213-223; these read SPHLEDETKELQ and VGRPEWWMDYQ. A Phosphoserine modification is found at Ser-247.

The protein belongs to the opioid neuropeptide precursor family. Post-translationally, proenkephalin-A is cleaved by CTSL to generate Met-enkephalin. In terms of processing, processed and degraded by ACE. Probably cleaved by ACE. Post-translationally, processed by ACE to generate Met-enkephalin in the nucleus accumbens of the brain. In terms of processing, the N-terminal domain contains 6 conserved cysteines thought to be involved in disulfide bonding and/or processing. Secreted by neuroendocrine chromaffin cells through cromaffin granules.

The protein resides in the cytoplasmic vesicle. The protein localises to the secretory vesicle. It is found in the chromaffin granule lumen. It localises to the secreted. Neuropeptide that competes with and mimic the effects of opiate drugs. They play a role in a number of physiologic functions, including pain perception and responses to stress. In terms of biological role, met-enkephalin-Arg-Phe neuropeptide acts as a strong ligand of Mu-type opioid receptor OPRM1. Met-enkephalin-Arg-Phe-binding to OPRM1 in the nucleus accumbens of the brain increases activation of OPRM1, leading to long-term synaptic depression of glutamate release. Its function is as follows. Increases glutamate release in the striatum and decreases GABA concentration in the striatum. Functionally, increases glutamate release in the striatum. Enkelytin possesses antibacterial activity against Gram-positive bacteria such as Micrococcus luteus and Bacillus megaterium. The sequence is that of Proenkephalin-A (PENK) from Bos taurus (Bovine).